A 113-amino-acid chain; its full sequence is UPF0145 protein TK1926 (113 aa).

It belongs to the UPF0145 family.

The sequence is that of UPF0145 protein TK1926 from Thermococcus kodakarensis (strain ATCC BAA-918 / JCM 12380 / KOD1) (Pyrococcus kodakaraensis (strain KOD1)).